The sequence spans 196 residues: Beta-crystallin A4 (196 aa).

The residue at position 2 (Thr-2) is an N-acetylthreonine. Residues 2 to 11 (TLQCTKSAGH) are N-terminal arm. Beta/gamma crystallin 'Greek key' domains lie at 12-51 (WRMV…KVLS) and 52-98 (GAWV…RPVA). The connecting peptide stretch occupies residues 99–104 (CANHRD). Beta/gamma crystallin 'Greek key' domains follow at residues 105–146 (SRLT…HVQS) and 147–195 (GAWV…RRIQ).

The protein belongs to the beta/gamma-crystallin family. In terms of assembly, homo/heterodimer, or complexes of higher-order. The structure of beta-crystallin oligomers seems to be stabilized through interactions between the N-terminal arms.

In terms of biological role, crystallins are the dominant structural components of the vertebrate eye lens. The sequence is that of Beta-crystallin A4 (Cryba4) from Mus musculus (Mouse).